Reading from the N-terminus, the 249-residue chain is MSIEDLKNTVTKLQERIQELEKKAGIIPDVPKSVRMVLIGPPGAGKGTQAPNLKEKFCACHLATGDMLRAQVAAKTALGVEAKKIMDQGGLVSDEIMVNMIKSELENNQECSKGFILDGFPRTIPQAEKLDSMLESRKTPLEKAVELKIDDELLVARITGRLVHPASGRSYHKLFNPPKKDMTDDVTGEPLVQRSDDNEDALKKRLVTYHKQTEPIVAYYQKTGIWSGVDASQKPTKVWSDILKCLGQN.

ATP is bound at residue 43-48; sequence GAGKGT. The tract at residues 63 to 92 is NMP; sequence ATGDMLRAQVAAKTALGVEAKKIMDQGGLV. AMP-binding positions include Thr64, Arg69, 90–92, 119–122, and Gln126; these read GLV and GFPR. The interval 160 to 197 is LID; sequence GRLVHPASGRSYHKLFNPPKKDMTDDVTGEPLVQRSDD. ATP-binding positions include Arg161 and 170-171; that span reads SY. The interval 177–197 is disordered; sequence PPKKDMTDDVTGEPLVQRSDD. Residues Arg194 and Arg205 each coordinate AMP. Gln233 contributes to the ATP binding site.

It belongs to the adenylate kinase family. AK2 subfamily. As to quaternary structure, monomer.

It is found in the cytoplasm. The protein resides in the cytosol. The protein localises to the mitochondrion intermembrane space. It catalyses the reaction AMP + ATP = 2 ADP. Functionally, catalyzes the reversible transfer of the terminal phosphate group between ATP and AMP. Plays an important role in cellular energy homeostasis and in adenine nucleotide metabolism. Adenylate kinase activity is critical for regulation of the phosphate utilization and the AMP de novo biosynthesis pathways. This chain is Adenylate kinase, found in Candida albicans (strain SC5314 / ATCC MYA-2876) (Yeast).